The chain runs to 569 residues: 3-(3-hydroxy-phenyl)propionate/3-hydroxycinnamic acid hydroxylase (569 aa).

FAD-binding positions include 8 to 37 (DVVI…VVDE) and 273 to 283 (FREGRLMLAGD).

The protein belongs to the PheA/TfdB FAD monooxygenase family. FAD is required as a cofactor.

The catalysed reaction is 3-(3-hydroxyphenyl)propanoate + NADH + O2 + H(+) = 3-(2,3-dihydroxyphenyl)propanoate + NAD(+) + H2O. The enzyme catalyses (2E)-3-(3-hydroxyphenyl)prop-2-enoate + NADH + O2 + H(+) = (2E)-3-(2,3-dihydroxyphenyl)prop-2-enoate + NAD(+) + H2O. The protein operates within aromatic compound metabolism; 3-phenylpropanoate degradation. Its function is as follows. Catalyzes the insertion of one atom of molecular oxygen into position 2 of the phenyl ring of 3-(3-hydroxyphenyl)propionate (3-HPP) and hydroxycinnamic acid (3HCI). The protein is 3-(3-hydroxy-phenyl)propionate/3-hydroxycinnamic acid hydroxylase of Mycolicibacterium gilvum (strain PYR-GCK) (Mycobacterium gilvum (strain PYR-GCK)).